The primary structure comprises 90 residues: Putative Fis-like DNA-binding protein (90 aa).

Residues 66-85 constitute a DNA-binding region (H-T-H motif); sequence QSRAAALLGIHRATLRKKLK.

The protein belongs to the transcriptional regulatory Fis family.

The sequence is that of Putative Fis-like DNA-binding protein from Xylella fastidiosa (strain Temecula1 / ATCC 700964).